The primary structure comprises 348 residues: Dihydroorotase (348 aa).

Residues His14 and His16 each contribute to the Zn(2+) site. Substrate contacts are provided by residues 16-18 (HLR) and Asn42. The Zn(2+) site is built by Lys100, His137, and His175. Lys100 carries the N6-carboxylysine modification. His137 serves as a coordination point for substrate. Substrate is bound at residue Leu220. Asp248 contributes to the Zn(2+) binding site. Residue Asp248 is part of the active site. Substrate contacts are provided by His252 and Ala264.

It belongs to the metallo-dependent hydrolases superfamily. DHOase family. Class II DHOase subfamily. In terms of assembly, homodimer. The cofactor is Zn(2+).

The enzyme catalyses (S)-dihydroorotate + H2O = N-carbamoyl-L-aspartate + H(+). Its pathway is pyrimidine metabolism; UMP biosynthesis via de novo pathway; (S)-dihydroorotate from bicarbonate: step 3/3. Functionally, catalyzes the reversible cyclization of carbamoyl aspartate to dihydroorotate. The sequence is that of Dihydroorotase from Pseudomonas aeruginosa (strain UCBPP-PA14).